Consider the following 358-residue polypeptide: Endoplasmic reticulum junction formation protein lunapark-B (358 aa).

Residues 1 to 45 (MGAIISRWKTKLTTVEQLENIDKEIKQLEEFRAKNQRLQKLWVGR) are Cytoplasmic-facing. Positions 9–41 (KTKLTTVEQLENIDKEIKQLEEFRAKNQRLQKL) form a coiled coil. Residues 46 to 66 (LLLYSSALYLLISLFVYLLYL) form a helical membrane-spanning segment. At 67-69 (PEQ) the chain is on the lumenal side. Residues 70–90 (WLLRLAMALPFFIYPVLVWFI) form a helical membrane-spanning segment. The Cytoplasmic portion of the chain corresponds to 91–358 (RRFLIFLFSK…SRGMDKHGRA (268 aa)). Positions 99–128 (SKRSERNNDKLEDLKATKKKILEEVMETET) form a coiled coil. Residues 275–300 (CQQCFSHNGMALKEEFEYLAFRCAYC) form a C4-type; plays a role in ER morphology zinc finger. The disordered stretch occupies residues 320–358 (NFEKRLRAESSTPGPAPHSATDTEESAPPSRGMDKHGRA).

The protein belongs to the lunapark family. Homodimer; homodimerization requires the C4-type zinc finger motif and decreases during mitosis in a phosphorylation-dependent manner. In terms of processing, phosphorylated. Phosphorylation occurs during interphase. Phosphorylation also occurs during mitosis; these phosphorylations reduce both its homodimerization and the ER three-way tubular junction formation.

It localises to the endoplasmic reticulum membrane. Endoplasmic reticulum (ER)-shaping membrane protein that plays a role in determining ER morphology. Involved in the stabilization of nascent three-way ER tubular junctions within the ER network. May also play a role as a curvature-stabilizing protein within three-way ER tubular junction network. The protein is Endoplasmic reticulum junction formation protein lunapark-B (lnpkb) of Takifugu rubripes (Japanese pufferfish).